The following is a 139-amino-acid chain: ATP synthase epsilon chain (139 aa).

It belongs to the ATPase epsilon chain family. As to quaternary structure, F-type ATPases have 2 components, CF(1) - the catalytic core - and CF(0) - the membrane proton channel. CF(1) has five subunits: alpha(3), beta(3), gamma(1), delta(1), epsilon(1). CF(0) has three main subunits: a, b and c.

It is found in the cell membrane. Functionally, produces ATP from ADP in the presence of a proton gradient across the membrane. This is ATP synthase epsilon chain from Roseiflexus sp. (strain RS-1).